We begin with the raw amino-acid sequence, 282 residues long: Phosphatidylglycerol--prolipoprotein diacylglyceryl transferase (282 aa).

The next 4 helical transmembrane spans lie at 19–39 (IGPI…LIGV), 59–79 (LSIW…VLFQ), 90–110 (IIAI…GTLA), and 120–140 (VPFW…QAIG). Arg141 serves as a coordination point for a 1,2-diacyl-sn-glycero-3-phospho-(1'-sn-glycerol). Helical transmembrane passes span 181–201 (TFLY…TLFF), 212–232 (VGTL…WIEG), and 245–265 (IAQV…AWLY).

It belongs to the Lgt family.

Its subcellular location is the cell inner membrane. It catalyses the reaction L-cysteinyl-[prolipoprotein] + a 1,2-diacyl-sn-glycero-3-phospho-(1'-sn-glycerol) = an S-1,2-diacyl-sn-glyceryl-L-cysteinyl-[prolipoprotein] + sn-glycerol 1-phosphate + H(+). It functions in the pathway protein modification; lipoprotein biosynthesis (diacylglyceryl transfer). Functionally, catalyzes the transfer of the diacylglyceryl group from phosphatidylglycerol to the sulfhydryl group of the N-terminal cysteine of a prolipoprotein, the first step in the formation of mature lipoproteins. This is Phosphatidylglycerol--prolipoprotein diacylglyceryl transferase from Trichormus variabilis (strain ATCC 29413 / PCC 7937) (Anabaena variabilis).